Consider the following 106-residue polypeptide: NADH-quinone oxidoreductase subunit K (106 aa).

3 helical membrane-spanning segments follow: residues 10-30 (IHYY…GVMV), 35-55 (VLIF…FVTF), and 67-87 (VVFF…AIVI).

Belongs to the complex I subunit 4L family. NDH-1 is composed of 14 different subunits. Subunits NuoA, H, J, K, L, M, N constitute the membrane sector of the complex.

Its subcellular location is the cell inner membrane. The catalysed reaction is a quinone + NADH + 5 H(+)(in) = a quinol + NAD(+) + 4 H(+)(out). Its function is as follows. NDH-1 shuttles electrons from NADH, via FMN and iron-sulfur (Fe-S) centers, to quinones in the respiratory chain. The immediate electron acceptor for the enzyme in this species is believed to be ubiquinone. Couples the redox reaction to proton translocation (for every two electrons transferred, four hydrogen ions are translocated across the cytoplasmic membrane), and thus conserves the redox energy in a proton gradient. The polypeptide is NADH-quinone oxidoreductase subunit K (Leptospira interrogans serogroup Icterohaemorrhagiae serovar copenhageni (strain Fiocruz L1-130)).